We begin with the raw amino-acid sequence, 203 residues long: GTP cyclohydrolase-2 (203 aa).

Residue 49–53 participates in GTP binding; sequence RIHSE. Residues C54, C65, and C67 each coordinate Zn(2+). GTP contacts are provided by residues Q70, 92 to 94, and T114; that span reads EGR. D126 functions as the Proton acceptor in the catalytic mechanism. The active-site Nucleophile is R128. Residues T149 and K154 each coordinate GTP.

This sequence belongs to the GTP cyclohydrolase II family. Zn(2+) is required as a cofactor.

It carries out the reaction GTP + 4 H2O = 2,5-diamino-6-hydroxy-4-(5-phosphoribosylamino)-pyrimidine + formate + 2 phosphate + 3 H(+). It participates in cofactor biosynthesis; riboflavin biosynthesis; 5-amino-6-(D-ribitylamino)uracil from GTP: step 1/4. Catalyzes the conversion of GTP to 2,5-diamino-6-ribosylamino-4(3H)-pyrimidinone 5'-phosphate (DARP), formate and pyrophosphate. The sequence is that of GTP cyclohydrolase-2 from Shewanella oneidensis (strain ATCC 700550 / JCM 31522 / CIP 106686 / LMG 19005 / NCIMB 14063 / MR-1).